We begin with the raw amino-acid sequence, 142 residues long: HTH-type transcriptional regulator LysM (142 aa).

An HTH asnC-type domain is found at 6-69 (IDESDLKILE…ELENEIRAIV (64 aa)). Residues 25-44 (YTLIAKELKVSEAAIRKRIE) constitute a DNA-binding region (H-T-H motif).

Homotetramer.

The protein localises to the cytoplasm. Its pathway is amino-acid biosynthesis; L-lysine biosynthesis via AAA pathway [regulation]. Its function is as follows. In the absence or at low concentrations of lysine, activates the biosynthesis of this amino acid via the alpha-aminoadipate (AAA) pathway. The protein is HTH-type transcriptional regulator LysM (lysM) of Saccharolobus solfataricus (strain ATCC 35092 / DSM 1617 / JCM 11322 / P2) (Sulfolobus solfataricus).